A 630-amino-acid polypeptide reads, in one-letter code: Arginine--tRNA ligase (630 aa).

The short motif at alanine 120–histidine 130 is the 'HIGH' region element.

The protein belongs to the class-I aminoacyl-tRNA synthetase family.

It localises to the cytoplasm. The enzyme catalyses tRNA(Arg) + L-arginine + ATP = L-arginyl-tRNA(Arg) + AMP + diphosphate. In Pyrobaculum aerophilum (strain ATCC 51768 / DSM 7523 / JCM 9630 / CIP 104966 / NBRC 100827 / IM2), this protein is Arginine--tRNA ligase.